Reading from the N-terminus, the 349-residue chain is Isopentenyl-diphosphate delta-isomerase (349 aa).

12–13 (RK) serves as a coordination point for substrate. Residues Ser-69, 70–72 (SMT), Ser-101, and Asn-129 contribute to the FMN site. 101-103 (SQR) lines the substrate pocket. Gln-164 contacts substrate. Position 165 (Glu-165) interacts with Mg(2+). FMN-binding positions include Lys-196, Thr-226, 279 to 281 (GIR), and 300 to 301 (AA).

This sequence belongs to the IPP isomerase type 2 family. Homooctamer. Dimer of tetramers. It depends on FMN as a cofactor. NADPH serves as cofactor. Requires Mg(2+) as cofactor.

It is found in the cytoplasm. It catalyses the reaction isopentenyl diphosphate = dimethylallyl diphosphate. Functionally, involved in the biosynthesis of isoprenoids. Catalyzes the 1,3-allylic rearrangement of the homoallylic substrate isopentenyl (IPP) to its allylic isomer, dimethylallyl diphosphate (DMAPP). The protein is Isopentenyl-diphosphate delta-isomerase of Paracoccus zeaxanthinifaciens.